Reading from the N-terminus, the 254-residue chain is Phosphoglycerate mutase 1 (254 aa).

Substrate-binding positions include 10-17 (RHGESTWN) and 23-24 (SG). H11 serves as the catalytic Tele-phosphohistidine intermediate. Residues S14 and S23 each carry the phosphoserine modification. The residue at position 26 (Y26) is a Phosphotyrosine. The residue at position 31 (S31) is a Phosphoserine. Substrate is bound by residues R62, 89–92 (ERHY), and K100. Catalysis depends on E89, which acts as the Proton donor/acceptor. K106 is modified (N6-acetyllysine). Position 116-117 (116-117 (RR)) interacts with substrate. S118 is modified (phosphoserine). 187–188 (GN) contacts substrate. K251 is modified (N6-acetyllysine; alternate). N6-succinyllysine; alternate is present on K251. An N6-acetyllysine mark is found at K253 and K254.

This sequence belongs to the phosphoglycerate mutase family. BPG-dependent PGAM subfamily. As to quaternary structure, homodimer. Acetylated at Lys-253, Lys-253 and Lys-254 under high glucose condition. Acetylation increases catalytic activity. Under glucose restriction SIRT1 levels dramatically increase and it deacetylates the enzyme.

The catalysed reaction is (2R)-2-phosphoglycerate = (2R)-3-phosphoglycerate. It carries out the reaction (2R)-3-phospho-glyceroyl phosphate = (2R)-2,3-bisphosphoglycerate + H(+). Its function is as follows. Catalyzes the interconversion of 2-phosphoglycerate and 3-phosphoglyceratea crucial step in glycolysis, by using 2,3-bisphosphoglycerate. Also catalyzes the interconversion of (2R)-2,3-bisphosphoglycerate and (2R)-3-phospho-glyceroyl phosphate. The sequence is that of Phosphoglycerate mutase 1 from Bos taurus (Bovine).